Here is a 161-residue protein sequence, read N- to C-terminus: Nucleotide-binding protein BamMC406_2474 (161 aa).

The protein belongs to the YajQ family.

Functionally, nucleotide-binding protein. This chain is Nucleotide-binding protein BamMC406_2474, found in Burkholderia ambifaria (strain MC40-6).